The sequence spans 248 residues: Triosephosphate isomerase (248 aa).

Residue 9-11 participates in substrate binding; sequence NWK. The Electrophile role is filled by His-94. Glu-166 serves as the catalytic Proton acceptor. Substrate-binding positions include Gly-172, Ser-211, and 232–233; that span reads GG.

Belongs to the triosephosphate isomerase family. As to quaternary structure, homodimer.

The protein resides in the cytoplasm. It carries out the reaction D-glyceraldehyde 3-phosphate = dihydroxyacetone phosphate. Its pathway is carbohydrate biosynthesis; gluconeogenesis. It functions in the pathway carbohydrate degradation; glycolysis; D-glyceraldehyde 3-phosphate from glycerone phosphate: step 1/1. Functionally, involved in the gluconeogenesis. Catalyzes stereospecifically the conversion of dihydroxyacetone phosphate (DHAP) to D-glyceraldehyde-3-phosphate (G3P). This is Triosephosphate isomerase from Vesicomyosocius okutanii subsp. Calyptogena okutanii (strain HA).